We begin with the raw amino-acid sequence, 2195 residues long: Integrator complex subunit 1 (2195 aa).

Residues 1-86 (MNRAKPTTVR…RPKLSSTPPL (86 aa)) form a disordered region. S13 carries the post-translational modification Phosphoserine. The segment covering 34-45 (GQASESKTTSTL) has biased composition (polar residues). K47 carries the post-translational modification N6-acetyllysine. Positions 62–75 (SASLSGTSALTGLT) are enriched in low complexity. At T83 the chain carries Phosphothreonine. S87 is subject to Phosphoserine. Positions 267-297 (LLQGEGARSGGELGAGSSPHPSLTEEEDSQT) are disordered. A phosphoserine mark is found at S307 and S926. Residues 923–947 (STASGEEDDEGESREQKAKKRQRQQ) form a disordered region. A helical transmembrane segment spans residues 1165-1185 (HILVVHAMVILLTLGPPRSGD). The tract at residues 1313-1347 (SLPPRRDSTEAPKPESSPEPPPGQGRTRAGTQVPV) is disordered. The segment covering 1316-1325 (PRRDSTEAPK) has biased composition (basic and acidic residues). S1320, S1328, and S1329 each carry phosphoserine.

This sequence belongs to the Integrator subunit 1 family. As to quaternary structure, component of the Integrator complex, composed of core subunits INTS1, INTS2, INTS3, INTS4, INTS5, INTS6, INTS7, INTS8, INTS9/RC74, INTS10, INTS11/CPSF3L, INTS12, INTS13, INTS14 and INTS15. The core complex associates with protein phosphatase 2A subunits PPP2CA and PPP2R1A, to form the Integrator-PP2A (INTAC) complex. Interacts with ESRRB, ESRRB is not a core component of the Integrator complex and this association is a bridge for the interaction with the multiprotein complex Integrator; attracts the transcriptional machinery.

It localises to the nucleus. The protein resides in the nucleus membrane. Component of the integrator complex, a multiprotein complex that terminates RNA polymerase II (Pol II) transcription in the promoter-proximal region of genes. The integrator complex provides a quality checkpoint during transcription elongation by driving premature transcription termination of transcripts that are unfavorably configured for transcriptional elongation: the complex terminates transcription by (1) catalyzing dephosphorylation of the C-terminal domain (CTD) of Pol II subunit POLR2A/RPB1 and SUPT5H/SPT5, (2) degrading the exiting nascent RNA transcript via endonuclease activity and (3) promoting the release of Pol II from bound DNA. The integrator complex is also involved in terminating the synthesis of non-coding Pol II transcripts, such as enhancer RNAs (eRNAs), small nuclear RNAs (snRNAs), telomerase RNAs and long non-coding RNAs (lncRNAs). Within the integrator complex, INTS1 is involved in the post-termination step: INTS1 displaces INTS3 and the SOSS factors, allowing the integrator complex to return to the closed conformation, ready to bind to the paused elongation complex for another termination cycle. Mediates recruitment of cytoplasmic dynein to the nuclear envelope, probably as component of the integrator complex. The protein is Integrator complex subunit 1 of Mus musculus (Mouse).